The primary structure comprises 508 residues: Photosystem II CP47 reaction center protein (508 aa).

6 helical membrane passes run 21–36 (AVHLMHTALVSGWAGS), 101–115 (IILSGLLFLAAIWHW), 140–156 (GIHLFLSGVLCFGFGAF), 203–218 (IAAGILGIIAGLFHLS), 237–252 (VLSSSIAAVFWAAFVV), and 457–472 (NFALLFFFGHIWHGSR).

Belongs to the PsbB/PsbC family. PsbB subfamily. As to quaternary structure, PSII is composed of 1 copy each of membrane proteins PsbA, PsbB, PsbC, PsbD, PsbE, PsbF, PsbH, PsbI, PsbJ, PsbK, PsbL, PsbM, PsbT, PsbX, PsbY, PsbZ, Psb30/Ycf12, at least 3 peripheral proteins of the oxygen-evolving complex and a large number of cofactors. It forms dimeric complexes. Binds multiple chlorophylls. PSII binds additional chlorophylls, carotenoids and specific lipids. is required as a cofactor.

The protein resides in the plastid. It localises to the chloroplast thylakoid membrane. Its function is as follows. One of the components of the core complex of photosystem II (PSII). It binds chlorophyll and helps catalyze the primary light-induced photochemical processes of PSII. PSII is a light-driven water:plastoquinone oxidoreductase, using light energy to abstract electrons from H(2)O, generating O(2) and a proton gradient subsequently used for ATP formation. This Staurastrum punctulatum (Green alga) protein is Photosystem II CP47 reaction center protein.